Here is a 125-residue protein sequence, read N- to C-terminus: Small ribosomal subunit protein uS12 (125 aa).

The tract at residues 1–28 (MPTINQLVRKGREKVKKKSKAPALEGNP) is disordered. The segment covering 9-20 (RKGREKVKKKSK) has biased composition (basic residues). Position 89 is a 3-methylthioaspartic acid (Asp89). Residues 104 to 125 (AAGVKDRKQSRSKYGTKRPKEK) are disordered. A compositionally biased stretch (basic residues) spans 113–125 (SRSKYGTKRPKEK).

The protein belongs to the universal ribosomal protein uS12 family. As to quaternary structure, part of the 30S ribosomal subunit. Contacts proteins S8 and S17. May interact with IF1 in the 30S initiation complex.

Functionally, with S4 and S5 plays an important role in translational accuracy. In terms of biological role, interacts with and stabilizes bases of the 16S rRNA that are involved in tRNA selection in the A site and with the mRNA backbone. Located at the interface of the 30S and 50S subunits, it traverses the body of the 30S subunit contacting proteins on the other side and probably holding the rRNA structure together. The combined cluster of proteins S8, S12 and S17 appears to hold together the shoulder and platform of the 30S subunit. The chain is Small ribosomal subunit protein uS12 from Persephonella marina (strain DSM 14350 / EX-H1).